The following is a 300-amino-acid chain: uncharacterized protein (300 aa).

Catalysis depends on H274, which acts as the Proton acceptor.

It belongs to the AB hydrolase superfamily. As to quaternary structure, monomer.

The catalysed reaction is a carboxylic ester + H2O = an alcohol + a carboxylate + H(+). This is an uncharacterized protein from Bacillus subtilis (strain 168).